Here is a 103-residue protein sequence, read N- to C-terminus: Co-chaperonin GroES (103 aa).

The protein belongs to the GroES chaperonin family. Heptamer of 7 subunits arranged in a ring. Interacts with the chaperonin GroEL.

The protein resides in the cytoplasm. In terms of biological role, together with the chaperonin GroEL, plays an essential role in assisting protein folding. The GroEL-GroES system forms a nano-cage that allows encapsulation of the non-native substrate proteins and provides a physical environment optimized to promote and accelerate protein folding. GroES binds to the apical surface of the GroEL ring, thereby capping the opening of the GroEL channel. This Synechococcus sp. (strain CC9605) protein is Co-chaperonin GroES.